A 339-amino-acid polypeptide reads, in one-letter code: Store-operated calcium entry-associated regulatory factor (339 aa).

An N-terminal signal peptide occupies residues 1-30; it reads MAAACGPGAAGYCLLLGLHLFLLTAGPALG. At 31–173 the chain is on the lumenal side; the sequence is WNDPDRMLLR…KWSSADSCNM (143 aa). A helical transmembrane segment spans residues 174–194; it reads SGLITIVVLLGIAFVVYKLFL. Residues 195–339 are Cytoplasmic-facing; sequence SDGQYSPPPY…ASGYGGTRRR (145 aa). The segment covering 318–330 has biased composition (polar residues); that stretch reads SVCSNSDTKTRTA. Residues 318–339 form a disordered region; that stretch reads SVCSNSDTKTRTASGYGGTRRR.

This sequence belongs to the SARAF family. As to quaternary structure, interacts with STIM1; the interaction is inhibited by the interaction of STIM1 with EFHB. As to expression, highly expressed in macrophages.

It is found in the endoplasmic reticulum membrane. Its function is as follows. Negative regulator of store-operated Ca(2+) entry (SOCE) involved in protecting cells from Ca(2+) overfilling. In response to cytosolic Ca(2+) elevation after endoplasmic reticulum Ca(2+) refilling, promotes a slow inactivation of STIM (STIM1 or STIM2)-dependent SOCE activity: possibly act by facilitating the deoligomerization of STIM to efficiently turn off ORAI when the endoplasmic reticulum lumen is filled with the appropriate Ca(2+) levels, and thus preventing the overload of the cell with excessive Ca(2+) ions. This chain is Store-operated calcium entry-associated regulatory factor (SARAF), found in Homo sapiens (Human).